The following is a 226-amino-acid chain: PKHD-type hydroxylase TERTU_2553 (226 aa).

The 100-residue stretch at 78-177 (KIYPPKFNCY…RVASFIWIQS (100 aa)) folds into the Fe2OG dioxygenase domain. Residues His-96, Asp-98, and His-158 each coordinate Fe cation. Position 168 (Arg-168) interacts with 2-oxoglutarate.

Fe(2+) serves as cofactor. The cofactor is L-ascorbate.

This Teredinibacter turnerae (strain ATCC 39867 / T7901) protein is PKHD-type hydroxylase TERTU_2553.